A 322-amino-acid chain; its full sequence is Acetyl-coenzyme A carboxylase carboxyl transferase subunit alpha (322 aa).

Positions 30-293 (ALDISAEITR…RQALQESLRK (264 aa)) constitute a CoA carboxyltransferase C-terminal domain.

This sequence belongs to the AccA family. In terms of assembly, acetyl-CoA carboxylase is a heterohexamer composed of biotin carboxyl carrier protein (AccB), biotin carboxylase (AccC) and two subunits each of ACCase subunit alpha (AccA) and ACCase subunit beta (AccD).

It localises to the cytoplasm. It carries out the reaction N(6)-carboxybiotinyl-L-lysyl-[protein] + acetyl-CoA = N(6)-biotinyl-L-lysyl-[protein] + malonyl-CoA. The protein operates within lipid metabolism; malonyl-CoA biosynthesis; malonyl-CoA from acetyl-CoA: step 1/1. Component of the acetyl coenzyme A carboxylase (ACC) complex. First, biotin carboxylase catalyzes the carboxylation of biotin on its carrier protein (BCCP) and then the CO(2) group is transferred by the carboxyltransferase to acetyl-CoA to form malonyl-CoA. This chain is Acetyl-coenzyme A carboxylase carboxyl transferase subunit alpha, found in Nitrosomonas eutropha (strain DSM 101675 / C91 / Nm57).